A 191-amino-acid polypeptide reads, in one-letter code: MELDEIKVFGRWSTKDVVVKDPGLRNYINLTPIYVPHTAGRYTKRQFEKAKMNIVERLVNKVMRREENTGKKLKALKIVENAFEIIEKRTKQNPIQVLVDAIENAGPREDTTRISYGGIVYLQSVDCSSLRRIDVALRNIALGAYMAAHKSKKPIEEALAEEIIAAARGDMQKSYAVRKKEETERVAQSAR.

It belongs to the universal ribosomal protein uS7 family. In terms of assembly, part of the 30S ribosomal subunit.

In terms of biological role, one of the primary rRNA binding proteins, it binds directly to 16S rRNA where it nucleates assembly of the head domain of the 30S subunit. Is located at the subunit interface close to the decoding center. This chain is Small ribosomal subunit protein uS7, found in Methanocaldococcus jannaschii (strain ATCC 43067 / DSM 2661 / JAL-1 / JCM 10045 / NBRC 100440) (Methanococcus jannaschii).